The following is a 243-amino-acid chain: Voltage-gated monoatomic cation channel TMEM109 (243 aa).

An N-terminal signal peptide occupies residues 1–33; that stretch reads MAGAHSNPSWSRHLFKAVLMVLGALLLVHSASA. At 34-83 the chain is on the lumenal side; sequence QTHREFASPGQQKRESSADILTEIGRSLKETLDTWLGPETMHVISETLLQ. Residues 84–104 form a helical membrane-spanning segment; the sequence is VMWAISSAISVACFALSGIAA. The Cytoplasmic portion of the chain corresponds to 105-135; sequence QLLSALGLDGEQLTQVLKLSPSQVQTLLLWG. A helical membrane pass occupies residues 136-156; that stretch reads AAALVIYWLLSLLLGLVLALL. The Lumenal portion of the chain corresponds to 157-185; that stretch reads GRILGGLKLVLFVAGFVGLVRSVPDPSTR. Residues 186-205 traverse the membrane as a helical segment; that stretch reads ALLLLALLTVFALLSRLTGS. The Cytoplasmic portion of the chain corresponds to 206–243; sequence RSSGTHLEAKVRGLERQIEELRGRQRRAAKIPRSMEEE.

In terms of assembly, homooligomer. Interacts with CRYAB; in the cellular response to DNA damage.

It localises to the nucleus outer membrane. Its subcellular location is the endoplasmic reticulum membrane. It is found in the sarcoplasmic reticulum membrane. The catalysed reaction is K(+)(in) = K(+)(out). It carries out the reaction Ca(2+)(in) = Ca(2+)(out). Functionally, functions as a voltage-gated monoatomic cation channel permeable to both potassium and calcium. Plays a role in the cellular response to DNA damage. The protein is Voltage-gated monoatomic cation channel TMEM109 of Rattus norvegicus (Rat).